Here is a 321-residue protein sequence, read N- to C-terminus: Coiled-coil domain-containing protein 42-like 1 (321 aa).

Coiled coils occupy residues 36 to 144 (IRRL…EKCH) and 202 to 229 (IVQF…WELR).

It belongs to the CFAP73 family.

In Xenopus laevis (African clawed frog), this protein is Coiled-coil domain-containing protein 42-like 1.